The primary structure comprises 130 residues: Small ribosomal subunit protein uS9 (130 aa).

Belongs to the universal ribosomal protein uS9 family.

The chain is Small ribosomal subunit protein uS9 from Paracidovorax citrulli (strain AAC00-1) (Acidovorax citrulli).